The following is a 522-amino-acid chain: Anthranilate synthase component 1 (522 aa).

L-tryptophan-binding positions include Ser40 and Pro292–Met294. Gly329–Thr330 serves as a coordination point for chorismate. Residue Glu362 coordinates Mg(2+). Residues Tyr450, Arg470, Gly484–Gly486, and Gly486 contribute to the chorismate site. Glu499 provides a ligand contact to Mg(2+).

Belongs to the anthranilate synthase component I family. Heterotetramer consisting of two non-identical subunits: a beta subunit (TrpG) and a large alpha subunit (TrpE). It depends on Mg(2+) as a cofactor.

It carries out the reaction chorismate + L-glutamine = anthranilate + pyruvate + L-glutamate + H(+). It functions in the pathway amino-acid biosynthesis; L-tryptophan biosynthesis; L-tryptophan from chorismate: step 1/5. With respect to regulation, feedback inhibited by tryptophan. Functionally, part of a heterotetrameric complex that catalyzes the two-step biosynthesis of anthranilate, an intermediate in the biosynthesis of L-tryptophan. In the first step, the glutamine-binding beta subunit (TrpG) of anthranilate synthase (AS) provides the glutamine amidotransferase activity which generates ammonia as a substrate that, along with chorismate, is used in the second step, catalyzed by the large alpha subunit of AS (TrpE) to produce anthranilate. In the absence of TrpG, TrpE can synthesize anthranilate directly from chorismate and high concentrations of ammonia. The chain is Anthranilate synthase component 1 (trpE) from Buchnera aphidicola subsp. Baizongia pistaciae (strain Bp).